Reading from the N-terminus, the 264-residue chain is Thymidylate synthase (264 aa).

Position 21 (arginine 21) interacts with dUMP. Histidine 51 lines the (6R)-5,10-methylene-5,6,7,8-tetrahydrofolate pocket. Position 126 to 127 (arginine 126 to arginine 127) interacts with dUMP. Cysteine 146 functions as the Nucleophile in the catalytic mechanism. DUMP-binding positions include arginine 166 to aspartate 169, asparagine 177, and histidine 207 to tyrosine 209. Residue aspartate 169 coordinates (6R)-5,10-methylene-5,6,7,8-tetrahydrofolate. Serine 263 provides a ligand contact to (6R)-5,10-methylene-5,6,7,8-tetrahydrofolate.

Belongs to the thymidylate synthase family. Bacterial-type ThyA subfamily. As to quaternary structure, homodimer.

It is found in the cytoplasm. The enzyme catalyses dUMP + (6R)-5,10-methylene-5,6,7,8-tetrahydrofolate = 7,8-dihydrofolate + dTMP. The protein operates within pyrimidine metabolism; dTTP biosynthesis. Its function is as follows. Catalyzes the reductive methylation of 2'-deoxyuridine-5'-monophosphate (dUMP) to 2'-deoxythymidine-5'-monophosphate (dTMP) while utilizing 5,10-methylenetetrahydrofolate (mTHF) as the methyl donor and reductant in the reaction, yielding dihydrofolate (DHF) as a by-product. This enzymatic reaction provides an intracellular de novo source of dTMP, an essential precursor for DNA biosynthesis. In Neisseria gonorrhoeae (strain ATCC 700825 / FA 1090), this protein is Thymidylate synthase.